We begin with the raw amino-acid sequence, 160 residues long: Epithelial membrane protein 1 (160 aa).

A helical membrane pass occupies residues 1–21 (MLVLLAGLFVVHIATAIMLFV). The N-linked (GlcNAc...) asparagine glycan is linked to Asn43. The next 3 membrane-spanning stretches (helical) occupy residues 67–87 (FMIL…FQLF), 95–115 (FFLS…GVSI), and 137–157 (FILT…YMVL).

This sequence belongs to the PMP-22/EMP/MP20 family. In terms of tissue distribution, most prominently found in the gastrointestinal tract, skin, lung, and brain but not in liver.

It is found in the membrane. This is Epithelial membrane protein 1 (Emp1) from Rattus norvegicus (Rat).